We begin with the raw amino-acid sequence, 172 residues long: Stellate protein CG33236/CG33240/CG33244/CG33245 (172 aa).

Belongs to the casein kinase 2 subunit beta family. Interacts in vitro with the casein kinase 2 alpha subunit (CkII-alpha). The relevance of such interaction is however unclear in vivo. In terms of tissue distribution, probably not expressed in wild-type flies. In males lacking the Y chromosome, it is testis-specific and constitutes the main component of star-shaped crystals.

In terms of biological role, unknown. In males lacking the Y chromosome, its strong overexpression leads to the appearance of proteinaceous star-shaped crystals in the primary spermatocytes causing meiotic drive, possibly by interfering with normal casein kinase 2 activity. In Drosophila melanogaster (Fruit fly), this protein is Stellate protein CG33236/CG33240/CG33244/CG33245 (Ste:CG33236).